The sequence spans 508 residues: Lysine--tRNA ligase (508 aa).

Mg(2+) contacts are provided by E418 and E425.

It belongs to the class-II aminoacyl-tRNA synthetase family. As to quaternary structure, homodimer. Mg(2+) is required as a cofactor.

The protein localises to the cytoplasm. It catalyses the reaction tRNA(Lys) + L-lysine + ATP = L-lysyl-tRNA(Lys) + AMP + diphosphate. The polypeptide is Lysine--tRNA ligase (Burkholderia cenocepacia (strain HI2424)).